Here is a 252-residue protein sequence, read N- to C-terminus: Probable transcriptional regulatory protein CE1776 (252 aa).

Residues 1–22 are disordered; the sequence is MAGHSKWATTKHKKAANDAKRG.

The protein belongs to the TACO1 family.

The protein resides in the cytoplasm. The protein is Probable transcriptional regulatory protein CE1776 of Corynebacterium efficiens (strain DSM 44549 / YS-314 / AJ 12310 / JCM 11189 / NBRC 100395).